The primary structure comprises 891 residues: DNA mismatch repair protein MutS (891 aa).

An ATP-binding site is contributed by 646–653 (GPNMAGKS).

It belongs to the DNA mismatch repair MutS family.

Functionally, this protein is involved in the repair of mismatches in DNA. It is possible that it carries out the mismatch recognition step. This protein has a weak ATPase activity. The polypeptide is DNA mismatch repair protein MutS (Rickettsia typhi (strain ATCC VR-144 / Wilmington)).